Consider the following 283-residue polypeptide: MAEITASLVKELRERTGAGMMECKKALVEANGDIELAIDNMRKSGQAKAAKKAGRVAAEGVILARIGAGFGVLVEMNCETDFVAKDAGFLGLANEVADFALANKGTTIETLAAQFEEKRAALVAKIGENMNIRRVQYLDGQVIAQYLHGAKIGVLVAGEGSDEELKKVAMHVAASRPEFVNPEDVSAEVVEHERQIQIDIAINSGKPKEIAEKMVEGRMKKFTGEVSLTGQAFVMDPSQSVGDYLKSVNTKVTNFIRLEVGEGIEKVEEDFAAEVAKITGGNA.

The interval 80–83 (TDFV) is involved in Mg(2+) ion dislocation from EF-Tu.

Belongs to the EF-Ts family.

Its subcellular location is the cytoplasm. Associates with the EF-Tu.GDP complex and induces the exchange of GDP to GTP. It remains bound to the aminoacyl-tRNA.EF-Tu.GTP complex up to the GTP hydrolysis stage on the ribosome. The chain is Elongation factor Ts from Actinobacillus pleuropneumoniae serotype 3 (strain JL03).